Consider the following 338-residue polypeptide: Probable tRNA pseudouridine synthase B (338 aa).

D82 serves as the catalytic Nucleophile. Residues 250–325 (LPKVWIRDSA…IAVDVDKVFM (76 aa)) enclose the PUA domain.

It belongs to the pseudouridine synthase TruB family. Type 2 subfamily.

It catalyses the reaction uridine(55) in tRNA = pseudouridine(55) in tRNA. Functionally, could be responsible for synthesis of pseudouridine from uracil-55 in the psi GC loop of transfer RNAs. The sequence is that of Probable tRNA pseudouridine synthase B from Thermococcus kodakarensis (strain ATCC BAA-918 / JCM 12380 / KOD1) (Pyrococcus kodakaraensis (strain KOD1)).